A 500-amino-acid chain; its full sequence is FAD-linked oxidoreductase srdI (500 aa).

The N-terminal stretch at methionine 1 to alanine 20 is a signal peptide. Asparagine 47 carries N-linked (GlcNAc...) asparagine glycosylation. One can recognise an FAD-binding PCMH-type domain in the interval tyrosine 69–serine 241. N-linked (GlcNAc...) asparagine glycosylation is found at asparagine 257 and asparagine 282.

It belongs to the oxygen-dependent FAD-linked oxidoreductase family. It depends on FAD as a cofactor.

FAD-linked oxidoreductase; part of the gene cluster that mediates the biosynthesis of sordarial, a salicylic aldehyde structurally related to the phytotoxin pyriculol. The most interesting aspect of this pathway is formation of an aromatic product from the highly reducing polyketide synthase srdA. SrdA synthesizes a reduced polyketide chain from one molecule of acetyl-CoA and five molecules of malonyl-CoA. The polyketide chain is then reductively released as an aldehyde. The oxidoreductases srdC, srdD and srdE then oxidize one of the hydroxy groups to facilitate the intramolecular aldol condensation, followed by dehydration to yield a salicylic aldehyde. This aldehyde can undergo facile reduction by endogenous reductases to yield the alcohol 1-hydroxy-2-hydroxymethyl-3-pent-1,3-dienylbenzene. The flavin-dependent srdI counteract against the propensity of the aldehydes to be reduced under physiological conditions and is responsible for reoxidizing 1-hydroxy-2-hydroxymethyl-3-pent-1,3-dienylbenzene back to the salicylic aldehyde. This salicylic aldehyde is then selectively epoxidized by the cupin-domain-containing oxidoreductase srdB to yield the epoxide, which can be hydrolyzed stereoselectively by the hydrolase srdG to give the final product sordarial. This is FAD-linked oxidoreductase srdI from Neurospora crassa (strain ATCC 24698 / 74-OR23-1A / CBS 708.71 / DSM 1257 / FGSC 987).